We begin with the raw amino-acid sequence, 743 residues long: Phosphoribosylformylglycinamidine synthase subunit PurL (743 aa).

The active site involves H50. Y53 and K92 together coordinate ATP. Position 94 (E94) interacts with Mg(2+). Substrate-binding positions include 95 to 98 (SHNH) and R117. H96 serves as the catalytic Proton acceptor. Residue D118 coordinates Mg(2+). Q241 serves as a coordination point for substrate. A Mg(2+)-binding site is contributed by D269. Position 313 to 315 (313 to 315 (ESQ)) interacts with substrate. The ATP site is built by D494 and G531. N532 serves as a coordination point for Mg(2+). S534 is a substrate binding site.

This sequence belongs to the FGAMS family. In terms of assembly, monomer. Part of the FGAM synthase complex composed of 1 PurL, 1 PurQ and 2 PurS subunits.

It localises to the cytoplasm. The enzyme catalyses N(2)-formyl-N(1)-(5-phospho-beta-D-ribosyl)glycinamide + L-glutamine + ATP + H2O = 2-formamido-N(1)-(5-O-phospho-beta-D-ribosyl)acetamidine + L-glutamate + ADP + phosphate + H(+). It participates in purine metabolism; IMP biosynthesis via de novo pathway; 5-amino-1-(5-phospho-D-ribosyl)imidazole from N(2)-formyl-N(1)-(5-phospho-D-ribosyl)glycinamide: step 1/2. Part of the phosphoribosylformylglycinamidine synthase complex involved in the purines biosynthetic pathway. Catalyzes the ATP-dependent conversion of formylglycinamide ribonucleotide (FGAR) and glutamine to yield formylglycinamidine ribonucleotide (FGAM) and glutamate. The FGAM synthase complex is composed of three subunits. PurQ produces an ammonia molecule by converting glutamine to glutamate. PurL transfers the ammonia molecule to FGAR to form FGAM in an ATP-dependent manner. PurS interacts with PurQ and PurL and is thought to assist in the transfer of the ammonia molecule from PurQ to PurL. This Sinorhizobium fredii (strain HH103) protein is Phosphoribosylformylglycinamidine synthase subunit PurL.